The following is a 356-amino-acid chain: tRNA-specific 2-thiouridylase MnmA 1 (356 aa).

Residues 8 to 15 (GMSGGVDS) and methionine 34 each bind ATP. Cysteine 103 serves as the catalytic Nucleophile. Cysteine 103 and cysteine 199 are joined by a disulfide. Glycine 127 contacts ATP. The tract at residues 149 to 151 (KDQ) is interaction with tRNA. The active-site Cysteine persulfide intermediate is the cysteine 199. The segment at 305-306 (RY) is interaction with tRNA.

The protein belongs to the MnmA/TRMU family.

The protein localises to the cytoplasm. It catalyses the reaction S-sulfanyl-L-cysteinyl-[protein] + uridine(34) in tRNA + AH2 + ATP = 2-thiouridine(34) in tRNA + L-cysteinyl-[protein] + A + AMP + diphosphate + H(+). Its function is as follows. Catalyzes the 2-thiolation of uridine at the wobble position (U34) of tRNA, leading to the formation of s(2)U34. The chain is tRNA-specific 2-thiouridylase MnmA 1 from Clostridium botulinum (strain Loch Maree / Type A3).